We begin with the raw amino-acid sequence, 313 residues long: Porphobilinogen deaminase (313 aa).

S-(dipyrrolylmethanemethyl)cysteine is present on cysteine 240.

The protein belongs to the HMBS family. As to quaternary structure, monomer. Dipyrromethane is required as a cofactor.

It carries out the reaction 4 porphobilinogen + H2O = hydroxymethylbilane + 4 NH4(+). It functions in the pathway porphyrin-containing compound metabolism; protoporphyrin-IX biosynthesis; coproporphyrinogen-III from 5-aminolevulinate: step 2/4. Its function is as follows. Tetrapolymerization of the monopyrrole PBG into the hydroxymethylbilane pre-uroporphyrinogen in several discrete steps. The chain is Porphobilinogen deaminase from Moorella thermoacetica (strain ATCC 39073 / JCM 9320).